We begin with the raw amino-acid sequence, 404 residues long: Ribosomal RNA large subunit methyltransferase F (404 aa).

Basic residues-rich tracts occupy residues 1–10 (MTKHSQKQNR) and 18–29 (QTRRKKPAGKLK). Disordered regions lie at residues 1–54 (MTKH…HERN), 156–177 (GTRQ…QRYK), and 289–308 (RAAK…PDAN). Residues 30–54 (AKSEAKLDTRGKPETTEKKGLHERN) are compositionally biased toward basic and acidic residues. Residues 157 to 172 (TRQNVPYASKPESSAP) show a composition bias toward polar residues.

It belongs to the methyltransferase superfamily. METTL16/RlmF family.

Its subcellular location is the cytoplasm. The enzyme catalyses adenosine(1618) in 23S rRNA + S-adenosyl-L-methionine = N(6)-methyladenosine(1618) in 23S rRNA + S-adenosyl-L-homocysteine + H(+). Specifically methylates the adenine in position 1618 of 23S rRNA. The polypeptide is Ribosomal RNA large subunit methyltransferase F (Shewanella sediminis (strain HAW-EB3)).